The following is an 82-amino-acid chain: UPF0213 protein SERP0126 (82 aa).

The GIY-YIG domain occupies 2 to 77 (DKHFVYIVKC…KTYTRQQKLK (76 aa)).

It belongs to the UPF0213 family.

The chain is UPF0213 protein SERP0126 from Staphylococcus epidermidis (strain ATCC 35984 / DSM 28319 / BCRC 17069 / CCUG 31568 / BM 3577 / RP62A).